The sequence spans 362 residues: 3-dehydroquinate synthase (362 aa).

NAD(+) is bound by residues aspartate 74–lysine 79, glycine 108–aspartate 112, threonine 132–threonine 133, lysine 145, lysine 154, and threonine 172–threonine 175. Residues glutamate 187, histidine 250, and histidine 267 each contribute to the Zn(2+) site.

The protein belongs to the sugar phosphate cyclases superfamily. Dehydroquinate synthase family. Requires Co(2+) as cofactor. It depends on Zn(2+) as a cofactor. NAD(+) is required as a cofactor.

It is found in the cytoplasm. It carries out the reaction 7-phospho-2-dehydro-3-deoxy-D-arabino-heptonate = 3-dehydroquinate + phosphate. Its pathway is metabolic intermediate biosynthesis; chorismate biosynthesis; chorismate from D-erythrose 4-phosphate and phosphoenolpyruvate: step 2/7. Functionally, catalyzes the conversion of 3-deoxy-D-arabino-heptulosonate 7-phosphate (DAHP) to dehydroquinate (DHQ). The sequence is that of 3-dehydroquinate synthase from Citrifermentans bemidjiense (strain ATCC BAA-1014 / DSM 16622 / JCM 12645 / Bem) (Geobacter bemidjiensis).